A 205-amino-acid polypeptide reads, in one-letter code: Nitrophorin-7 (205 aa).

Residues 1–20 form the signal peptide; it reads MELYTALLAVTILSPSSIVG. Intrachain disulfides connect Cys-25–Cys-144 and Cys-62–Cys-193. Asp-52 contacts histamine. Residues His-80 and Asn-91 each coordinate heme. Histamine is bound at residue Asp-154.

Belongs to the calycin superfamily. Nitrophorin family. Forms oligomers (at pH 5.5). The cofactor is heme b. In terms of tissue distribution, expressed in the endothelial cells of the salivary glands.

The protein resides in the secreted. The catalysed reaction is 3 nitrite + 2 H(+) = 2 nitric oxide + nitrate + H2O. In terms of biological role, converts nitrite as the sole substrate to form nitric oxide gas (NO). NO(2-) serves both as an electron donor and as an electron acceptor. Binds to negatively charged cell surfaces of activated platelets; binds to L-a-phosphatidyl-L-serine (PS)-bearing phospholipid membranes. Once bound on an activated platelet, NP7 releases its stored nitric oxide gas (NO) into the victim's tissues while feeding, resulting in vasodilation and inhibition of platelet aggregation. Also acts as an anticoagulant by blocking coagulation-factor binding sites. Has antihistamine activity; binds histamine with high affinity. This is Nitrophorin-7 from Rhodnius prolixus (Triatomid bug).